A 170-amino-acid chain; its full sequence is Transcriptional repressor NrdR (170 aa).

The segment at 3–34 (CPFCRHPDSRVVDSRVTDDGTAIRRRRSCPEC) is a zinc-finger region. The ATP-cone domain occupies 46–136 (LSVIKRSGVI…VYRGFESLED (91 aa)). Positions 151–170 (ERSETVERGRPVPSRGVDDR) are disordered.

The protein belongs to the NrdR family. Requires Zn(2+) as cofactor.

Functionally, negatively regulates transcription of bacterial ribonucleotide reductase nrd genes and operons by binding to NrdR-boxes. The protein is Transcriptional repressor NrdR of Acidothermus cellulolyticus (strain ATCC 43068 / DSM 8971 / 11B).